A 304-amino-acid chain; its full sequence is UDP-N-acetylenolpyruvoylglucosamine reductase (304 aa).

In terms of domain architecture, FAD-binding PCMH-type spans 33-198 (KVGGPVDILL…LEVTFNLEKG (166 aa)). The active site involves Arg177. The active-site Proton donor is the Ser227. Glu297 is an active-site residue.

The protein belongs to the MurB family. It depends on FAD as a cofactor.

It localises to the cytoplasm. The catalysed reaction is UDP-N-acetyl-alpha-D-muramate + NADP(+) = UDP-N-acetyl-3-O-(1-carboxyvinyl)-alpha-D-glucosamine + NADPH + H(+). The protein operates within cell wall biogenesis; peptidoglycan biosynthesis. Functionally, cell wall formation. In Clostridium kluyveri (strain NBRC 12016), this protein is UDP-N-acetylenolpyruvoylglucosamine reductase.